We begin with the raw amino-acid sequence, 84 residues long: MPQIKSAIKRVKTQEAARVRNIAQMNAMRTAVKKFKTATEQNADNSQDLYKAAARAIDMANSKGLIKKNKAGRDKSRLSALLNK.

The protein belongs to the bacterial ribosomal protein bS20 family.

In terms of biological role, binds directly to 16S ribosomal RNA. The polypeptide is Small ribosomal subunit protein bS20 (Lacticaseibacillus casei (strain BL23) (Lactobacillus casei)).